The following is a 184-amino-acid chain: dCTP deaminase (184 aa).

107-112 (KSTIAR) contacts dCTP. The active-site Proton donor/acceptor is the Glu133. Positions 152, 166, and 176 each coordinate dCTP.

This sequence belongs to the dCTP deaminase family. In terms of assembly, homotrimer.

The enzyme catalyses dCTP + H2O + H(+) = dUTP + NH4(+). Its pathway is pyrimidine metabolism; dUMP biosynthesis; dUMP from dCTP (dUTP route): step 1/2. Its function is as follows. Catalyzes the deamination of dCTP to dUTP. This chain is dCTP deaminase, found in Roseiflexus castenholzii (strain DSM 13941 / HLO8).